The sequence spans 317 residues: D-alanine--D-alanine ligase (317 aa).

Positions 104 to 303 (KRVWLQHGLP…YAELCVAILA (200 aa)) constitute an ATP-grasp domain. 130–185 (PDRLGLPLILKPPHEGSTVGITKVAACADMEQAYAAASHFDEVVLAEQFVRGRELT) lines the ATP pocket. Mg(2+)-binding residues include Asp257, Glu270, and Asn272.

Belongs to the D-alanine--D-alanine ligase family. Mg(2+) is required as a cofactor. It depends on Mn(2+) as a cofactor.

Its subcellular location is the cytoplasm. The enzyme catalyses 2 D-alanine + ATP = D-alanyl-D-alanine + ADP + phosphate + H(+). The protein operates within cell wall biogenesis; peptidoglycan biosynthesis. Its function is as follows. Cell wall formation. This is D-alanine--D-alanine ligase from Bordetella avium (strain 197N).